A 285-amino-acid chain; its full sequence is Sulfotransferase 2A1 (285 aa).

6 residues coordinate 3'-phosphoadenylyl sulfate: K44, S45, G46, T47, N48, and W49. H99 functions as the Proton acceptor in the catalytic mechanism. 3'-phosphoadenylyl sulfate contacts are provided by R121, S129, Y184, S218, M223, R247, K248, and G249. S251 bears the Phosphoserine mark.

The protein belongs to the sulfotransferase 1 family. As to quaternary structure, homodimer. Post-translationally, the N-terminus is blocked. Liver, adrenal and at lower level in the kidney. Is present in human fetus in higher level in the adrenal than the liver and the kidney.

The protein localises to the cytoplasm. It catalyses the reaction an alcohol + 3'-phosphoadenylyl sulfate = an alkyl sulfate + adenosine 3',5'-bisphosphate + H(+). It carries out the reaction (24S)-hydroxycholesterol + 3'-phosphoadenylyl sulfate = (24S)-hydroxycholesterol 24-sulfate + adenosine 3',5'-bisphosphate + H(+). The enzyme catalyses (24S)-hydroxycholesterol + 3'-phosphoadenylyl sulfate = (24S)-hydroxycholesterol 3-sulfate + adenosine 3',5'-bisphosphate + H(+). The catalysed reaction is (24S)-hydroxycholesterol 24-sulfate + 3'-phosphoadenylyl sulfate = (24S)-hydroxycholesterol 3,24-disulfate + adenosine 3',5'-bisphosphate + H(+). It catalyses the reaction 3beta-hydroxyandrost-5-en-17-one + 3'-phosphoadenylyl sulfate = dehydroepiandrosterone 3-sulfate + adenosine 3',5'-bisphosphate + H(+). It carries out the reaction pregnenolone + 3'-phosphoadenylyl sulfate = pregnenolone sulfate + adenosine 3',5'-bisphosphate + H(+). The enzyme catalyses androsterone + 3'-phosphoadenylyl sulfate = androsterone 3alpha-sulfate + adenosine 3',5'-bisphosphate + H(+). The catalysed reaction is taurolithocholate + 3'-phosphoadenylyl sulfate = taurolithocholate 3-sulfate + adenosine 3',5'-bisphosphate + H(+). It catalyses the reaction lithocholate + 3'-phosphoadenylyl sulfate = lithocholate sulfate + adenosine 3',5'-bisphosphate + H(+). Its activity is regulated as follows. Subject to substrate inhibition. Alternate orientations for binding of steroid substrates to SULT2A1 may play a role in substrate inhibition. Its function is as follows. Sulfotransferase that utilizes 3'-phospho-5'-adenylyl sulfate (PAPS) as sulfonate donor to catalyze the sulfonation of steroids and bile acids in the liver and adrenal glands. Mediates the sulfation of a wide range of steroids and sterols, including pregnenolone, androsterone, DHEA, bile acids, cholesterol and as well many xenobiotics that contain alcohol and phenol functional groups. Sulfonation increases the water solubility of most compounds, and therefore their renal excretion, but it can also result in bioactivation to form active metabolites. Plays an important role in maintening steroid and lipid homeostasis. Plays a key role in bile acid metabolism. In addition, catalyzes the metabolic activation of potent carcinogenic polycyclic arylmethanols. This chain is Sulfotransferase 2A1 (SULT2A1), found in Homo sapiens (Human).